A 426-amino-acid chain; its full sequence is Glutamyl-tRNA reductase (426 aa).

Residues 49-52 (TCNR), Ser-109, 114-116 (EGQ), and Gln-120 contribute to the substrate site. Cys-50 serves as the catalytic Nucleophile. 189 to 194 (GAGETG) lines the NADP(+) pocket.

The protein belongs to the glutamyl-tRNA reductase family. Homodimer.

It catalyses the reaction (S)-4-amino-5-oxopentanoate + tRNA(Glu) + NADP(+) = L-glutamyl-tRNA(Glu) + NADPH + H(+). It participates in porphyrin-containing compound metabolism; protoporphyrin-IX biosynthesis; 5-aminolevulinate from L-glutamyl-tRNA(Glu): step 1/2. It functions in the pathway porphyrin-containing compound metabolism; chlorophyll biosynthesis. Catalyzes the NADPH-dependent reduction of glutamyl-tRNA(Glu) to glutamate 1-semialdehyde (GSA). This Prosthecochloris aestuarii (strain DSM 271 / SK 413) protein is Glutamyl-tRNA reductase.